The primary structure comprises 436 residues: UPF0229 protein mll9637 (436 aa).

The segment at 54–103 is disordered; that stretch reads IPRKGTGEPTFGDDKESGRRQHILPGNRTFSSGDLIPKPGGGGGYGSAAG.

The protein belongs to the UPF0229 family.

This Mesorhizobium japonicum (strain LMG 29417 / CECT 9101 / MAFF 303099) (Mesorhizobium loti (strain MAFF 303099)) protein is UPF0229 protein mll9637.